The primary structure comprises 155 residues: Small ribosomal subunit protein uS7 (155 aa).

The protein belongs to the universal ribosomal protein uS7 family. Part of the 30S ribosomal subunit. Contacts proteins S9 and S11.

One of the primary rRNA binding proteins, it binds directly to 16S rRNA where it nucleates assembly of the head domain of the 30S subunit. Is located at the subunit interface close to the decoding center, probably blocks exit of the E-site tRNA. The sequence is that of Small ribosomal subunit protein uS7 from Corynebacterium aurimucosum (strain ATCC 700975 / DSM 44827 / CIP 107346 / CN-1) (Corynebacterium nigricans).